Here is a 296-residue protein sequence, read N- to C-terminus: tRNA dimethylallyltransferase (296 aa).

19–26 (GPTASGKS) lines the ATP pocket. Residue 21 to 26 (TASGKS) coordinates substrate.

Belongs to the IPP transferase family. As to quaternary structure, monomer. Requires Mg(2+) as cofactor.

It carries out the reaction adenosine(37) in tRNA + dimethylallyl diphosphate = N(6)-dimethylallyladenosine(37) in tRNA + diphosphate. Functionally, catalyzes the transfer of a dimethylallyl group onto the adenine at position 37 in tRNAs that read codons beginning with uridine, leading to the formation of N6-(dimethylallyl)adenosine (i(6)A). In Dinoroseobacter shibae (strain DSM 16493 / NCIMB 14021 / DFL 12), this protein is tRNA dimethylallyltransferase.